The primary structure comprises 120 residues: Chaperonin GroEL (120 aa).

23 to 27 is a binding site for ATP; the sequence is DGTTT.

It belongs to the chaperonin (HSP60) family. In terms of assembly, forms a cylinder of 14 subunits composed of two heptameric rings stacked back-to-back. Interacts with the co-chaperonin GroES.

Its subcellular location is the cytoplasm. The enzyme catalyses ATP + H2O + a folded polypeptide = ADP + phosphate + an unfolded polypeptide.. Together with its co-chaperonin GroES, plays an essential role in assisting protein folding. The GroEL-GroES system forms a nano-cage that allows encapsulation of the non-native substrate proteins and provides a physical environment optimized to promote and accelerate protein folding. In Mycolicibacterium vaccae (Mycobacterium vaccae), this protein is Chaperonin GroEL.